We begin with the raw amino-acid sequence, 690 residues long: MGCFESKPDQQVQPVTVRSPTDIFWLVLYVVFWIALIVIAVFSFIYGNPLRIINGYDSFGNTCGVRSNDKFSNFPLSGMNTEDKPYLFFLDIKELRHTLKICVKECPQRELLNAAELYRYYEDRKTKLCRYDFNMSMLQTQEANQGAKYFDFNGPCPPFPVYQSAPVLHRCIPTGVNAPLQQVKKMYALINSWEATQQVFSDLYKAWPTIVLICALSLVFSIVMIALLHWLATIVSWLICIIVVVASVGITGVLWWSYYKAKHTLDTDQQLSYLEELVRNEATIYVLAIAATCIMIILLVVIYYLREKLTGLAALFEEAGKCMLQLPGLAGPPLLAFLALSVFLAFWVVVVVCLATANYPGVKPLLPLAQLEDSASIANDPKLKPELAGKNDTSFKSFKLVEYHDVNVLRHMLWIYIIGLIWTSEFIFACQQLAIAGAVAFWYFRKPTDSPVLLAIAKLVKYHLGSVAKGSLIITIFKIPRLILTYLYAKLKRHQQEGSECASCCLRCCICSFWLLEKFIRYLNHNAYTVIAIEGVNFCPAAKIAWNALVTNALQVATINGIGDFVLFLGKLAVASICGLISILLLRDNPDLHFYMAPVIIITVFAFFIAHIILSLYEMVVDTLFLCVCEDRTINGNSGRWKESNLARLLGEAPEEDAVEAPMQEVQLTPITKQPFSAQFLQAEMENSKA.

Residues Ile-23–Ser-43 traverse the membrane as a helical segment. Asn-134 carries N-linked (GlcNAc...) asparagine glycosylation. Helical transmembrane passes span Leu-203–Val-223, Trp-237–Tyr-259, Ala-282–Ile-302, and Leu-334–Leu-354. N-linked (GlcNAc...) asparagine glycosylation occurs at Asn-391. The next 4 helical transmembrane spans lie at Ile-415–Ile-435, Leu-464–Leu-484, Phe-565–Leu-585, and Phe-594–Leu-614.

It belongs to the CTL (choline transporter-like) family.

It is found in the membrane. The chain is Choline transporter-like 1 from Anopheles gambiae (African malaria mosquito).